Here is a 330-residue protein sequence, read N- to C-terminus: o-succinylbenzoate synthase (330 aa).

Lysine 130 functions as the Proton donor in the catalytic mechanism. Residues aspartate 155, glutamate 184, and aspartate 206 each contribute to the Mg(2+) site. Lysine 228 serves as the catalytic Proton acceptor.

It belongs to the mandelate racemase/muconate lactonizing enzyme family. MenC type 1 subfamily. In terms of assembly, monomer. A divalent metal cation serves as cofactor.

It catalyses the reaction (1R,6R)-6-hydroxy-2-succinyl-cyclohexa-2,4-diene-1-carboxylate = 2-succinylbenzoate + H2O. The protein operates within quinol/quinone metabolism; 1,4-dihydroxy-2-naphthoate biosynthesis; 1,4-dihydroxy-2-naphthoate from chorismate: step 4/7. It participates in cofactor biosynthesis; phylloquinone biosynthesis. In terms of biological role, converts 2-succinyl-6-hydroxy-2,4-cyclohexadiene-1-carboxylate (SHCHC) to 2-succinylbenzoate (OSB). Does not show N-succinylamino acid racemase (NSAR) activity with N-succinyl-L-phenylglycine as substrate. The protein is o-succinylbenzoate synthase of Bdellovibrio bacteriovorus (strain ATCC 15356 / DSM 50701 / NCIMB 9529 / HD100).